The chain runs to 273 residues: MQKALETKRLTLSYGETIIIDELNLEIPKGEITIFIGSNGCGKSTLLRSLARLLKPTTGDILLDNQAIQSMQTKQIARQMAILPQGPQAPEGLTVLQLVKQGRYPYQTWLKQWSEKDEEMVQNALAATGMTEFAERDVHALSGGQRQRAWIAMTLAQDTDIILLDEPTTYLDMTHQIEVLDLLFELNETEQRTIVMVLHDLNLACRYADNIVAIQDKQIYAQGKPEEVVDEKLVRDVFRMECQISTDPLFGTPLCIPHGKGRRVRKEVAHAMR.

Residues 5 to 241 (LETKRLTLSY…KLVRDVFRME (237 aa)) enclose the ABC transporter domain. Residue 37–44 (GSNGCGKS) participates in ATP binding.

It belongs to the ABC transporter superfamily. The complex is composed of two ATP-binding proteins (FpuD), two transmembrane proteins (FpuB) and a solute-binding protein (FpuA).

Its subcellular location is the cell membrane. The catalysed reaction is a Fe(III)-siderophore(out) + ATP + H2O = a Fe(III)-siderophore(in) + ADP + phosphate + H(+). Part of an ABC transporter complex involved in ferric-petrobactin uptake. Probably responsible for energy coupling to the transport system. This chain is Petrobactin import ATP-binding protein FpuD, found in Bacillus anthracis.